Reading from the N-terminus, the 92-residue chain is Elongation factor 1-beta (92 aa).

Belongs to the EF-1-beta/EF-1-delta family.

Its function is as follows. Promotes the exchange of GDP for GTP in EF-1-alpha/GDP, thus allowing the regeneration of EF-1-alpha/GTP that could then be used to form the ternary complex EF-1-alpha/GTP/AAtRNA. The chain is Elongation factor 1-beta from Korarchaeum cryptofilum (strain OPF8).